The chain runs to 305 residues: uncharacterized protein (305 aa).

Residues 208-236 (SYAQSPAVKKKKWRHSGGKKNNPRENHID) are disordered. The span at 215-225 (VKKKKWRHSGG) shows a compositional bias: basic residues.

This is an uncharacterized protein from Bacillus subtilis (strain 168).